Here is a 391-residue protein sequence, read N- to C-terminus: Formate-dependent phosphoribosylglycinamide formyltransferase (391 aa).

N(1)-(5-phospho-beta-D-ribosyl)glycinamide contacts are provided by residues 20–21 (EL) and Glu80. ATP-binding positions include Arg112, Lys153, 158 to 163 (SSGKGQ), 193 to 196 (EGFV), and Glu201. The 190-residue stretch at 117 to 306 (RLAAEELGLP…EFALHVRAFT (190 aa)) folds into the ATP-grasp domain. The Mg(2+) site is built by Glu265 and Glu277. N(1)-(5-phospho-beta-D-ribosyl)glycinamide-binding positions include Asp284, Lys354, and 361-362 (RR).

This sequence belongs to the PurK/PurT family. In terms of assembly, homodimer.

The enzyme catalyses N(1)-(5-phospho-beta-D-ribosyl)glycinamide + formate + ATP = N(2)-formyl-N(1)-(5-phospho-beta-D-ribosyl)glycinamide + ADP + phosphate + H(+). It functions in the pathway purine metabolism; IMP biosynthesis via de novo pathway; N(2)-formyl-N(1)-(5-phospho-D-ribosyl)glycinamide from N(1)-(5-phospho-D-ribosyl)glycinamide (formate route): step 1/1. In terms of biological role, involved in the de novo purine biosynthesis. Catalyzes the transfer of formate to 5-phospho-ribosyl-glycinamide (GAR), producing 5-phospho-ribosyl-N-formylglycinamide (FGAR). Formate is provided by PurU via hydrolysis of 10-formyl-tetrahydrofolate. This chain is Formate-dependent phosphoribosylglycinamide formyltransferase, found in Vibrio cholerae serotype O1 (strain ATCC 39315 / El Tor Inaba N16961).